Consider the following 146-residue polypeptide: Small ribosomal subunit protein uS9 (146 aa).

Residue serine 3 is modified to Phosphoserine. The residue at position 60 (lysine 60) is an N6-acetyllysine.

This sequence belongs to the universal ribosomal protein uS9 family. In terms of assembly, component of the small ribosomal subunit. Part of the small subunit (SSU) processome, composed of more than 70 proteins and the RNA chaperone small nucleolar RNA (snoRNA) U3.

The protein localises to the cytoplasm. It localises to the nucleus. It is found in the nucleolus. Component of the small ribosomal subunit. The ribosome is a large ribonucleoprotein complex responsible for the synthesis of proteins in the cell. Part of the small subunit (SSU) processome, first precursor of the small eukaryotic ribosomal subunit. During the assembly of the SSU processome in the nucleolus, many ribosome biogenesis factors, an RNA chaperone and ribosomal proteins associate with the nascent pre-rRNA and work in concert to generate RNA folding, modifications, rearrangements and cleavage as well as targeted degradation of pre-ribosomal RNA by the RNA exosome. In Bos taurus (Bovine), this protein is Small ribosomal subunit protein uS9 (RPS16).